The chain runs to 366 residues: Glycine betaine monooxygenase reductase subunit (366 aa).

Residues 16 to 119 (NGRHLVRCVK…HGPVGLFNAI (104 aa)) form the FAD-binding FR-type domain. Residues 282–366 (HQVEFTATGK…VPKGDVVIDY (85 aa)) enclose the 2Fe-2S ferredoxin-type domain. [2Fe-2S] cluster contacts are provided by cysteine 316, cysteine 321, cysteine 324, and cysteine 354.

This sequence in the N-terminal section; belongs to the FAD-binding oxidoreductase type 6 family. The system is composed of an oxygenase subunit (GbcA) and a reductase subunit (GbcB). It depends on FAD as a cofactor. [2Fe-2S] cluster serves as cofactor.

It carries out the reaction glycine betaine + NADH + O2 + H(+) = N,N-dimethylglycine + formaldehyde + NAD(+) + H2O. Functionally, involved in degradation of glycine betaine. Part of a Rieske-type oxygenase system that catalyzes the conversion of glycine betaine (GB) to dimethylglycine (DMG). This subunit is the ferredoxin reductase component of the system. Required for growth on choline and GB, but not for growth on DMG. In Pseudomonas aeruginosa (strain ATCC 15692 / DSM 22644 / CIP 104116 / JCM 14847 / LMG 12228 / 1C / PRS 101 / PAO1), this protein is Glycine betaine monooxygenase reductase subunit.